Here is a 407-residue protein sequence, read N- to C-terminus: Na(+)-translocating NADH-quinone reductase subunit F (407 aa).

The helical transmembrane segment at 3–23 (IILGVVMFTLIVLALVLVILF) threads the bilayer. The 2Fe-2S ferredoxin-type domain maps to 32–126 (GDITISVNDD…DMDIELPEEI (95 aa)). Residues C69, C75, C78, and C110 each coordinate [2Fe-2S] cluster. Positions 129 to 269 (VKKWECTVIS…SGPFGEFFAK (141 aa)) constitute an FAD-binding FR-type domain. The tract at residues 272 to 389 (DAEMVFVGGG…PMMNAAVIGM (118 aa)) is catalytic.

It belongs to the NqrF family. Composed of six subunits; NqrA, NqrB, NqrC, NqrD, NqrE and NqrF. Requires [2Fe-2S] cluster as cofactor. FAD is required as a cofactor.

It localises to the cell inner membrane. The catalysed reaction is a ubiquinone + n Na(+)(in) + NADH + H(+) = a ubiquinol + n Na(+)(out) + NAD(+). In terms of biological role, NQR complex catalyzes the reduction of ubiquinone-1 to ubiquinol by two successive reactions, coupled with the transport of Na(+) ions from the cytoplasm to the periplasm. The first step is catalyzed by NqrF, which accepts electrons from NADH and reduces ubiquinone-1 to ubisemiquinone by a one-electron transfer pathway. This Vibrio campbellii (strain ATCC BAA-1116) protein is Na(+)-translocating NADH-quinone reductase subunit F.